Consider the following 120-residue polypeptide: Crustacean hyperglycemic hormones 1 (120 aa).

The N-terminal stretch at 1 to 24 (MIAFRAVWSALLASLLLLLLAPSA) is a signal peptide. Cystine bridges form between cysteine 53–cysteine 89, cysteine 69–cysteine 85, and cysteine 72–cysteine 98. Valine 118 is modified (valine amide).

It belongs to the arthropod CHH/MIH/GIH/VIH hormone family. As to expression, produced by the medulla terminalis X-organ in the eyestalks and transported to the sinus gland where they are stored and released.

It localises to the secreted. Functionally, hormone found in the sinus gland of isopods and decapods which controls the blood sugar level. Has a secretagogue action over the amylase released from the midgut gland. May act as a stress hormone and may be involved in the control of molting and reproduction. The protein is Crustacean hyperglycemic hormones 1 of Penaeus japonicus (Kuruma prawn).